Reading from the N-terminus, the 54-residue chain is uncharacterized protein (54 aa).

Basic and acidic residues-rich tracts occupy residues 1–19 (MTEK…HNDL) and 26–54 (EELK…YDTK). A disordered region spans residues 1-54 (MTEKKQQNKPNENPEHNDLTDPIPNEELKENMNDEKHKRQQRDNSQSERDYDTK).

This is an uncharacterized protein from Bacillus subtilis (strain 168).